A 328-amino-acid polypeptide reads, in one-letter code: Tetraacyldisaccharide 4'-kinase (328 aa).

55–62 contributes to the ATP binding site; that stretch reads TAGGNGKT.

Belongs to the LpxK family.

It catalyses the reaction a lipid A disaccharide + ATP = a lipid IVA + ADP + H(+). The protein operates within glycolipid biosynthesis; lipid IV(A) biosynthesis; lipid IV(A) from (3R)-3-hydroxytetradecanoyl-[acyl-carrier-protein] and UDP-N-acetyl-alpha-D-glucosamine: step 6/6. Functionally, transfers the gamma-phosphate of ATP to the 4'-position of a tetraacyldisaccharide 1-phosphate intermediate (termed DS-1-P) to form tetraacyldisaccharide 1,4'-bis-phosphate (lipid IVA). This is Tetraacyldisaccharide 4'-kinase from Escherichia coli (strain K12 / MC4100 / BW2952).